A 690-amino-acid chain; its full sequence is Eukaryotic translation initiation factor 3 subunit B (690 aa).

Residues 1-11 (MAKKKSEEHSG) are compositionally biased toward basic and acidic residues. Residues 1 to 36 (MAKKKSEEHSGADANDSDYQEEPNFEDPPGFVDNIS) are disordered. Residues 15–25 (NDSDYQEEPNF) are compositionally biased toward acidic residues. The RRM domain maps to 57–141 (SVVVVDNIPK…HTFAVNLFTD (85 aa)). WD repeat units lie at residues 207–246 (TRER…KIQK), 293–331 (DGMS…LLDL), 334–369 (IKIP…TLME), 442–484 (EIRE…KPSL), and 530–575 (PDHF…IKRT). The stretch at 595-645 (EEKQKEIKKNLKKYYAAFEQKDRLRLTRASKELLEKRSQLRETFMEYRNKR) forms a coiled coil.

It belongs to the eIF-3 subunit B family. In terms of assembly, component of the eukaryotic translation initiation factor 3 (eIF-3) complex. The eIF-3 complex interacts with pix. Interacts with mxt.

The protein localises to the cytoplasm. Its function is as follows. RNA-binding component of the eukaryotic translation initiation factor 3 (eIF-3) complex, which is involved in protein synthesis of a specialized repertoire of mRNAs and, together with other initiation factors, stimulates binding of mRNA and methionyl-tRNAi to the 40S ribosome. The eIF-3 complex specifically targets and initiates translation of a subset of mRNAs involved in cell proliferation. The protein is Eukaryotic translation initiation factor 3 subunit B of Drosophila yakuba (Fruit fly).